Consider the following 61-residue polypeptide: Protein transport protein Sec61 subunit beta (61 aa).

Over 1–35 the chain is Cytoplasmic; it reads MKRPSTQRAPATVNKGGNSMMKFYSEDAIGLKVGP. Residues 36–56 traverse the membrane as a helical segment; sequence TAVLFMSLIFIAFVIILHIMG. At 57-61 the chain is on the extracellular side; it reads KYTRS.

It belongs to the SEC61-beta family. As to quaternary structure, the SEC61 channel-forming translocon complex.

It is found in the endoplasmic reticulum membrane. Its function is as follows. Component of SEC61 channel-forming translocon complex that mediates transport of signal peptide-containing precursor polypeptides across the endoplasmic reticulum (ER). Forms a ribosome receptor and a gated pore in the ER membrane, both functions required for cotranslational translocation of nascent polypeptides. In Dictyostelium discoideum (Social amoeba), this protein is Protein transport protein Sec61 subunit beta (sec61b).